A 468-amino-acid polypeptide reads, in one-letter code: Immunoglobulin superfamily member 21 (468 aa).

Residues 1 to 24 (MRAAPSLRRASCLLLAAILDLARG) form the signal peptide. Ig-like domains follow at residues 25 to 132 (YLTV…VVLA) and 344 to 429 (PKIM…TRLI). Cys-46 and Cys-116 are oxidised to a cystine.

Interacts (Ig-like 1 domain) with NRXN2 (via Laminin G-like 1 domain) in a trans-interaction manner. In terms of tissue distribution, expressed in brain.

It localises to the postsynaptic cell membrane. Its function is as follows. Involved in synaptic inhibition in the brain. Selectively regulates inhibitory presynaptic differentiation through interacting with presynaptic NRXN2. The protein is Immunoglobulin superfamily member 21 of Rattus norvegicus (Rat).